The sequence spans 355 residues: NADH-quinone oxidoreductase subunit H (355 aa).

The next 8 membrane-spanning stretches (helical) occupy residues 25–45, 91–111, 126–146, 170–190, 205–225, 253–273, 290–310, and 330–350; these read VVRILVVSVVILLCVAYLILW, WLYLIAPIMTVVPAFAVWAVI, LLYAMAISSIGVYAVILAGWA, MGFALVLVLMTAGSLNLSEIV, FLSWNWLPLLPAFVVYFISGI, MAFALFFLAEYINMIVISALA, FIPGIFWLVLKVFALLSVFIW, and VFLPVTVIWVVVVGCWMMSPL.

This sequence belongs to the complex I subunit 1 family. NDH-1 is composed of 14 different subunits. Subunits NuoA, H, J, K, L, M, N constitute the membrane sector of the complex.

The protein localises to the cell inner membrane. It catalyses the reaction a quinone + NADH + 5 H(+)(in) = a quinol + NAD(+) + 4 H(+)(out). In terms of biological role, NDH-1 shuttles electrons from NADH, via FMN and iron-sulfur (Fe-S) centers, to quinones in the respiratory chain. The immediate electron acceptor for the enzyme in this species is believed to be ubiquinone. Couples the redox reaction to proton translocation (for every two electrons transferred, four hydrogen ions are translocated across the cytoplasmic membrane), and thus conserves the redox energy in a proton gradient. This subunit may bind ubiquinone. The sequence is that of NADH-quinone oxidoreductase subunit H from Burkholderia cenocepacia (strain ATCC BAA-245 / DSM 16553 / LMG 16656 / NCTC 13227 / J2315 / CF5610) (Burkholderia cepacia (strain J2315)).